We begin with the raw amino-acid sequence, 301 residues long: Transcription elongation factor A protein 1 (301 aa).

Residue M1 is modified to N-acetylmethionine. A TFIIS N-terminal domain is found at 3–80 (DEVIRIAKKM…KSWKKLLDGP (78 aa)). K55 participates in a covalent cross-link: Glycyl lysine isopeptide (Lys-Gly) (interchain with G-Cter in ubiquitin). A phosphoserine mark is found at S57, S81, S97, and S100. A compositionally biased stretch (basic and acidic residues) spans 76-93 (LLDGPSTDKDSEEKKKDT). A disordered region spans residues 76-139 (LLDGPSTDKD…FPRAPSTSDS (64 aa)). A TFIIS central domain is found at 140 to 256 (VRLKCREMLA…EHQMAKTGGT (117 aa)). The TFIIS-type zinc finger occupies 259–299 (DLFTCGKCKKKNCTYTQVQTRSADEPMTTFVVCNECGNRWK). C263, C266, C291, and C294 together coordinate Zn(2+).

The protein belongs to the TFS-II family. In terms of assembly, interacts with EAF2. Associates with UBR5 and forms a transcription regulatory complex made of CDK9, Pol II, UBR5 and TCEA1/TFIIS. Part of TBP-based Pol II pre-initiation complex (PIC), in which Pol II core assembles with general transcription factors and other specific initiation factors including GTF2E1, GTF2E2, GTF2F1, GTF2F2, TCEA1, ERCC2, ERCC3, GTF2H2, GTF2H3, GTF2H4, GTF2H5, GTF2A1, GTF2A2, GTF2B and TBP; this large multi-subunit PIC complex mediates DNA unwinding and targets Pol II core to the transcription start site where the first phosphodiester bond forms.

The protein localises to the nucleus. Its function is as follows. Necessary for efficient RNA polymerase II transcription elongation past template-encoded arresting sites. The arresting sites in DNA have the property of trapping a certain fraction of elongating RNA polymerases that pass through, resulting in locked ternary complexes. Cleavage of the nascent transcript by S-II allows the resumption of elongation from the new 3'-terminus. This is Transcription elongation factor A protein 1 (TCEA1) from Bos taurus (Bovine).